A 2162-amino-acid polypeptide reads, in one-letter code: Polyketide synthase 1 (2162 aa).

An N-terminal acylcarrier protein transacylase domain (SAT) region spans residues 19-264 (FVFGDQTSCN…TPLAVHAPYH (246 aa)). The region spanning 397–841 (DSKIAIIGMS…GGNTALLVED (445 aa)) is the Ketosynthase family 3 (KS3) domain. Catalysis depends on for beta-ketoacyl synthase activity residues cysteine 578, histidine 713, and histidine 757. The segment at 941 to 1245 (AFVFSGQGSQ…PSLMRSHDGW (305 aa)) is malonyl-CoA:ACP transacylase (MAT) domain. Serine 1030 serves as the catalytic For acyl/malonyl transferase activity. Residues 1322 to 1636 (TASVHRIVRE…RRVLDAAMPA (315 aa)) are product template (PT) domain. The N-terminal hotdog fold stretch occupies residues 1326-1459 (HRIVRESVDR…SSLCFGESRA (134 aa)). The 306-residue stretch at 1326 to 1631 (HRIVRESVDR…FQGVPRRVLD (306 aa)) folds into the PKS/mFAS DH domain. The active-site Proton acceptor; for dehydratase activity is the histidine 1358. The interval 1486-1631 (LNSRLSSGVI…FQGVPRRVLD (146 aa)) is C-terminal hotdog fold. Aspartate 1545 serves as the catalytic Proton donor; for dehydratase activity. A disordered region spans residues 1633–1669 (AMPAPKSPNKTRDHASPNATISRAKPPQGSSPASSAQ). Over residues 1658–1669 (PPQGSSPASSAQ) the composition is skewed to low complexity. The region spanning 1692–1766 (IDPMHAVLRI…DFAVHLGLDT (75 aa)) is the Carrier 1 domain. Serine 1726 is modified (O-(pantetheine 4'-phosphoryl)serine). A compositionally biased stretch (low complexity) spans 1772–1783 (SSGESNVSGGVS). Residues 1772–1809 (SSGESNVSGGVSPRSDSVAAMSSDVTTPPAQSPLGSMS) form a disordered region. Residues 1794 to 1809 (SDVTTPPAQSPLGSMS) are compositionally biased toward polar residues. The Carrier 2 domain occupies 1807 to 1884 (SMSSSPCEDL…SFKHVFEQEI (78 aa)). At serine 1844 the chain carries O-(pantetheine 4'-phosphoryl)serine. The segment at 1896-2160 (LKKYHATSTL…ERVAAFIRSA (265 aa)) is thioesterase (TE) domain. Catalysis depends on serine 1987, which acts as the For thioesterase activity.

Its function is as follows. Polyketide synthase; part of the Pks1 gene cluster that mediates the biosynthesis of an anthraquinone derivative pigment that contributes to conidial pigmentation that provides protection from UV radiation, heat and cold stress. The polyketide synthase Pks1 produces 1-acetyl-2,4,6,8-tetrahydroxy-9,10-anthraquinone though condensation of acetyl-CoA with malonyl-CoA. The dehydratase EthD and the laccase Mlac1 further convert the anthraquinone derivative into the final conidial pigment. The polypeptide is Polyketide synthase 1 (Metarhizium album (strain ARSEF 1941)).